Reading from the N-terminus, the 580-residue chain is 2-succinyl-5-enolpyruvyl-6-hydroxy-3-cyclohexene-1-carboxylate synthase (580 aa).

Belongs to the TPP enzyme family. MenD subfamily. As to quaternary structure, homodimer. Mg(2+) is required as a cofactor. Mn(2+) serves as cofactor. Requires thiamine diphosphate as cofactor.

It carries out the reaction isochorismate + 2-oxoglutarate + H(+) = 5-enolpyruvoyl-6-hydroxy-2-succinyl-cyclohex-3-ene-1-carboxylate + CO2. The protein operates within quinol/quinone metabolism; 1,4-dihydroxy-2-naphthoate biosynthesis; 1,4-dihydroxy-2-naphthoate from chorismate: step 2/7. It functions in the pathway quinol/quinone metabolism; menaquinone biosynthesis. Catalyzes the thiamine diphosphate-dependent decarboxylation of 2-oxoglutarate and the subsequent addition of the resulting succinic semialdehyde-thiamine pyrophosphate anion to isochorismate to yield 2-succinyl-5-enolpyruvyl-6-hydroxy-3-cyclohexene-1-carboxylate (SEPHCHC). The sequence is that of 2-succinyl-5-enolpyruvyl-6-hydroxy-3-cyclohexene-1-carboxylate synthase from Listeria monocytogenes serotype 4b (strain F2365).